The primary structure comprises 100 residues: NADH-quinone oxidoreductase subunit K (100 aa).

Helical transmembrane passes span 4 to 24, 28 to 48, and 60 to 80; these read LQHGLILAAILFVLGLTGLVI, LLFMLIGLEIMINASALAFVV, and VMYILAISLAAAEASIGLALL.

It belongs to the complex I subunit 4L family. In terms of assembly, NDH-1 is composed of 13 different subunits. Subunits NuoA, H, J, K, L, M, N constitute the membrane sector of the complex.

Its subcellular location is the cell inner membrane. It carries out the reaction a quinone + NADH + 5 H(+)(in) = a quinol + NAD(+) + 4 H(+)(out). Functionally, NDH-1 shuttles electrons from NADH, via FMN and iron-sulfur (Fe-S) centers, to quinones in the respiratory chain. The immediate electron acceptor for the enzyme in this species is believed to be ubiquinone. Couples the redox reaction to proton translocation (for every two electrons transferred, four hydrogen ions are translocated across the cytoplasmic membrane), and thus conserves the redox energy in a proton gradient. This Citrobacter koseri (strain ATCC BAA-895 / CDC 4225-83 / SGSC4696) protein is NADH-quinone oxidoreductase subunit K.